We begin with the raw amino-acid sequence, 196 residues long: Phosphoheptose isomerase (196 aa).

In terms of domain architecture, SIS spans 35–194; that stretch reads LTACLRCGGK…EKELFTPSGQ (160 aa). 50–52 lines the substrate pocket; it reads NGG. Residues His-59 and Glu-63 each contribute to the Zn(2+) site. Substrate is bound by residues Glu-63, 92 to 93, 118 to 120, Ser-123, and Gln-170; these read ND and STS. 2 residues coordinate Zn(2+): Gln-170 and His-178.

The protein belongs to the SIS family. GmhA subfamily. As to quaternary structure, homotetramer. It depends on Zn(2+) as a cofactor.

It is found in the cytoplasm. It carries out the reaction 2 D-sedoheptulose 7-phosphate = D-glycero-alpha-D-manno-heptose 7-phosphate + D-glycero-beta-D-manno-heptose 7-phosphate. It participates in carbohydrate biosynthesis; D-glycero-D-manno-heptose 7-phosphate biosynthesis; D-glycero-alpha-D-manno-heptose 7-phosphate and D-glycero-beta-D-manno-heptose 7-phosphate from sedoheptulose 7-phosphate: step 1/1. Catalyzes the isomerization of sedoheptulose 7-phosphate in D-glycero-D-manno-heptose 7-phosphate. The protein is Phosphoheptose isomerase of Syntrophotalea carbinolica (strain DSM 2380 / NBRC 103641 / GraBd1) (Pelobacter carbinolicus).